The chain runs to 280 residues: Shikimate dehydrogenase (NADP(+)) (280 aa).

Shikimate-binding positions include 18-20 (SRS) and threonine 65. Lysine 69 serves as the catalytic Proton acceptor. The shikimate site is built by asparagine 90 and aspartate 105. Residues 130-134 (GAGGA), 154-159 (NRTLAR), and leucine 219 each bind NADP(+). Tyrosine 221 contributes to the shikimate binding site. Glycine 242 provides a ligand contact to NADP(+).

The protein belongs to the shikimate dehydrogenase family. Homodimer.

It carries out the reaction shikimate + NADP(+) = 3-dehydroshikimate + NADPH + H(+). It functions in the pathway metabolic intermediate biosynthesis; chorismate biosynthesis; chorismate from D-erythrose 4-phosphate and phosphoenolpyruvate: step 4/7. Involved in the biosynthesis of the chorismate, which leads to the biosynthesis of aromatic amino acids. Catalyzes the reversible NADPH linked reduction of 3-dehydroshikimate (DHSA) to yield shikimate (SA). This is Shikimate dehydrogenase (NADP(+)) from Mesorhizobium japonicum (strain LMG 29417 / CECT 9101 / MAFF 303099) (Mesorhizobium loti (strain MAFF 303099)).